The primary structure comprises 498 residues: ATP synthase subunit beta, chloroplastic (498 aa).

An ATP-binding site is contributed by 172–179 (GGAGVGKT).

The protein belongs to the ATPase alpha/beta chains family. In terms of assembly, F-type ATPases have 2 components, CF(1) - the catalytic core - and CF(0) - the membrane proton channel. CF(1) has five subunits: alpha(3), beta(3), gamma(1), delta(1), epsilon(1). CF(0) has four main subunits: a(1), b(1), b'(1) and c(9-12).

It localises to the plastid. The protein localises to the chloroplast thylakoid membrane. The catalysed reaction is ATP + H2O + 4 H(+)(in) = ADP + phosphate + 5 H(+)(out). Its function is as follows. Produces ATP from ADP in the presence of a proton gradient across the membrane. The catalytic sites are hosted primarily by the beta subunits. The chain is ATP synthase subunit beta, chloroplastic from Solanum lycopersicum (Tomato).